We begin with the raw amino-acid sequence, 270 residues long: Proteasome subunit alpha (270 aa).

A disordered region spans residues 229-270; it reads LLDTEAAGSTPTDAPSDTEDGDSTDGTDRADGTTDSTEETEK. Residues 244 to 253 show a composition bias toward acidic residues; that stretch reads SDTEDGDSTD.

It belongs to the peptidase T1A family. In terms of assembly, the 20S proteasome core is composed of 14 alpha and 14 beta subunits that assemble into four stacked heptameric rings, resulting in a barrel-shaped structure. The two inner rings, each composed of seven catalytic beta subunits, are sandwiched by two outer rings, each composed of seven alpha subunits. The catalytic chamber with the active sites is on the inside of the barrel. Has a gated structure, the ends of the cylinder being occluded by the N-termini of the alpha-subunits. Is capped by the proteasome-associated ATPase, ARC.

The protein localises to the cytoplasm. Its pathway is protein degradation; proteasomal Pup-dependent pathway. With respect to regulation, the formation of the proteasomal ATPase ARC-20S proteasome complex, likely via the docking of the C-termini of ARC into the intersubunit pockets in the alpha-rings, may trigger opening of the gate for substrate entry. Interconversion between the open-gate and close-gate conformations leads to a dynamic regulation of the 20S proteasome proteolysis activity. In terms of biological role, component of the proteasome core, a large protease complex with broad specificity involved in protein degradation. The chain is Proteasome subunit alpha from Streptomyces griseus subsp. griseus (strain JCM 4626 / CBS 651.72 / NBRC 13350 / KCC S-0626 / ISP 5235).